The chain runs to 211 residues: Redox-sensing transcriptional repressor Rex (211 aa).

A DNA-binding region (H-T-H motif) is located at residues 17 to 56 (LYYRFVSILKGKGIDRVNSKTISEALQIDSATIRRDFSYF). 91 to 96 (GIGNLG) serves as a coordination point for NAD(+).

This sequence belongs to the transcriptional regulatory Rex family. As to quaternary structure, homodimer.

The protein localises to the cytoplasm. Its function is as follows. Modulates transcription in response to changes in cellular NADH/NAD(+) redox state. This Staphylococcus epidermidis (strain ATCC 35984 / DSM 28319 / BCRC 17069 / CCUG 31568 / BM 3577 / RP62A) protein is Redox-sensing transcriptional repressor Rex.